Reading from the N-terminus, the 123-residue chain is Small ribosomal subunit protein uS12 (123 aa).

Residue aspartate 89 is modified to 3-methylthioaspartic acid.

Belongs to the universal ribosomal protein uS12 family. Part of the 30S ribosomal subunit. Contacts proteins S8 and S17. May interact with IF1 in the 30S initiation complex.

In terms of biological role, with S4 and S5 plays an important role in translational accuracy. Interacts with and stabilizes bases of the 16S rRNA that are involved in tRNA selection in the A site and with the mRNA backbone. Located at the interface of the 30S and 50S subunits, it traverses the body of the 30S subunit contacting proteins on the other side and probably holding the rRNA structure together. The combined cluster of proteins S8, S12 and S17 appears to hold together the shoulder and platform of the 30S subunit. This chain is Small ribosomal subunit protein uS12, found in Methylorubrum extorquens (strain PA1) (Methylobacterium extorquens).